The primary structure comprises 132 residues: Small ribosomal subunit protein uS11 (132 aa).

Belongs to the universal ribosomal protein uS11 family. As to quaternary structure, part of the 30S ribosomal subunit. Interacts with proteins S7 and S18. Binds to IF-3.

Its function is as follows. Located on the platform of the 30S subunit, it bridges several disparate RNA helices of the 16S rRNA. Forms part of the Shine-Dalgarno cleft in the 70S ribosome. The sequence is that of Small ribosomal subunit protein uS11 from Clostridioides difficile (strain 630) (Peptoclostridium difficile).